Consider the following 433-residue polypeptide: UPF0597 protein DNO_0106 (433 aa).

It belongs to the UPF0597 family.

In Dichelobacter nodosus (strain VCS1703A), this protein is UPF0597 protein DNO_0106.